The sequence spans 223 residues: Golgi to ER traffic protein 1 (223 aa).

Position 1 (Met-1) is a topological domain, lumenal. The chain crosses the membrane as a helical span at residues Ser-2–Ser-21. The Cytoplasmic segment spans residues Thr-22 to Lys-105. A coiled-coil region spans residues Glu-56–Lys-105. Residues Leu-106 to Tyr-126 traverse the membrane as a helical segment. Over Asn-127–Gly-177 the chain is Lumenal. The chain crosses the membrane as a helical span at residues Val-178–Ile-194. Over Glu-195–Asp-223 the chain is Cytoplasmic.

Belongs to the WRB/GET1 family. Component of the Golgi to ER traffic (GET) complex, which is composed of GET1, GET2 and GET3. Within the complex, GET1 and GET2 form a heterotetramer which is stabilized by phosphatidylinositol binding and which binds to the GET3 homodimer.

Its subcellular location is the endoplasmic reticulum membrane. The protein localises to the golgi apparatus membrane. In terms of biological role, required for the post-translational delivery of tail-anchored (TA) proteins to the endoplasmic reticulum. Together with GET2, acts as a membrane receptor for soluble GET3, which recognizes and selectively binds the transmembrane domain of TA proteins in the cytosol. The GET complex cooperates with the HDEL receptor ERD2 to mediate the ATP-dependent retrieval of resident ER proteins that contain a C-terminal H-D-E-L retention signal from the Golgi to the ER. In Candida glabrata (strain ATCC 2001 / BCRC 20586 / JCM 3761 / NBRC 0622 / NRRL Y-65 / CBS 138) (Yeast), this protein is Golgi to ER traffic protein 1.